The sequence spans 532 residues: Protein PTST homolog 2, chloroplastic (532 aa).

The transit peptide at 1–71 (MVSINSGPIS…KPRKKSCCSR (71 aa)) directs the protein to the chloroplast. 4 disordered regions span residues 165–201 (QLPN…SRND), 256–292 (EVDG…SETW), 314–347 (SSGL…EDVN), and 367–388 (HSLR…TAGN). Residues 173–183 (EMDKTLNHGDL) show a composition bias toward basic and acidic residues. Basic and acidic residues predominate over residues 320–339 (VKKDDTKKDSGDSMNGKDRI). The stretch at 389-454 (LENLSDDWEY…ASRALRLLRT (66 aa)) forms a coiled coil.

Interacts with PTST3 and SS4. Interacts with MFP1; the interaction is essential for the initiation of starch granules biosynthesis in leaf chloroplasts, for the correct location of the process in the stromal spaces between the thylakoid membranes, and for the association of this protein with the thylakoid membranes. Interacts with PII1/MRC; the interaction is essential for the initiation of starch granules biosynthesis in leaf chloroplasts.

It is found in the plastid. The protein localises to the chloroplast. Its subcellular location is the chloroplast thylakoid membrane. Its function is as follows. Involved in starch granule initiation in leaf chloroplasts. Binds and delivers suitable maltooligosaccharide substrates to starch synthase 4 (SS4). The chain is Protein PTST homolog 2, chloroplastic from Arabidopsis thaliana (Mouse-ear cress).